The sequence spans 276 residues: Large ribosomal subunit protein uL2 (276 aa).

2 disordered regions span residues 1–50 (MPIK…GRVT) and 206–276 (GKAG…SKKR). Residues 7–19 (RPTTPTRRFQTVV) are compositionally biased toward polar residues. Residues 20–38 (SREDITKQTPEKSLVESKK) show a composition bias toward basic and acidic residues.

Belongs to the universal ribosomal protein uL2 family. In terms of assembly, part of the 50S ribosomal subunit. Forms a bridge to the 30S subunit in the 70S ribosome.

Its function is as follows. One of the primary rRNA binding proteins. Required for association of the 30S and 50S subunits to form the 70S ribosome, for tRNA binding and peptide bond formation. It has been suggested to have peptidyltransferase activity; this is somewhat controversial. Makes several contacts with the 16S rRNA in the 70S ribosome. The chain is Large ribosomal subunit protein uL2 from Solibacter usitatus (strain Ellin6076).